The chain runs to 272 residues: MTTIVKRALVAAGMVLAIGGAAQANEGGVSLHKQDWSWKGIFGRYDQPQLQRGFQVFHEVCSTCHGMKRVAYRNLSALGFSEDGIKELAAEKEFPAGPDDNGDMFTRPGTPADHIPSPFANDKAAAAANGGAAPPDLSLLAKARPGGPNYIYSLLEGYASDSPGEPAEWWVKQQQEKGLEVAFNEAKYFNDYFPGHAISMPPPLMDDLITYEDGTAATKDQMAQDVVAYLNWAAEPELDARKSLGLKVLLFLGVLTAMLLALKLAIWRDVKH.

Positions 1-24 (MTTIVKRALVAAGMVLAIGGAAQA) are cleaved as a signal peptide. The heme c site is built by Cys-61, Cys-64, His-65, and Met-200. Residues 244–261 (LGLKVLLFLGVLTAMLLA) traverse the membrane as a helical segment.

In terms of assembly, the main subunits of complex b-c1 are: cytochrome b, cytochrome c1 and the Rieske protein. Post-translationally, binds 1 heme c group covalently per subunit.

Its subcellular location is the cell membrane. Its function is as follows. Component of the ubiquinol-cytochrome c reductase complex (complex III or cytochrome b-c1 complex), which is a respiratory chain that generates an electrochemical potential coupled to ATP synthesis. The polypeptide is Cytochrome c1 (petC) (Rhodospirillum rubrum).